The following is a 407-amino-acid chain: Argininosuccinate synthase (407 aa).

ATP is bound by residues 16–24 and Ala-44; that span reads AYSGGLDTS. Residues Tyr-96 and Ser-101 each coordinate L-citrulline. ATP is bound at residue Gly-126. Positions 128, 132, and 133 each coordinate L-aspartate. Asn-132 is a binding site for L-citrulline. L-citrulline-binding residues include Arg-136, Ser-185, Ser-194, Glu-270, and Tyr-282.

It belongs to the argininosuccinate synthase family. Type 1 subfamily. In terms of assembly, homotetramer.

Its subcellular location is the cytoplasm. It carries out the reaction L-citrulline + L-aspartate + ATP = 2-(N(omega)-L-arginino)succinate + AMP + diphosphate + H(+). It functions in the pathway amino-acid biosynthesis; L-arginine biosynthesis; L-arginine from L-ornithine and carbamoyl phosphate: step 2/3. The polypeptide is Argininosuccinate synthase (Shewanella amazonensis (strain ATCC BAA-1098 / SB2B)).